Consider the following 301-residue polypeptide: GTPase Era (301 aa).

Residues 6 to 173 (KSGFVAIVGR…LEQTNANLEI (168 aa)) form the Era-type G domain. The tract at residues 14-21 (GRPNVGKS) is G1. 14–21 (GRPNVGKS) serves as a coordination point for GTP. The tract at residues 40 to 44 (QTTRN) is G2. The G3 stretch occupies residues 61-64 (DTPG). GTP-binding positions include 61-65 (DTPGI) and 123-126 (NKID). Residues 123–126 (NKID) form a G4 region. The G5 stretch occupies residues 152-154 (ISA). The KH type-2 domain occupies 204-282 (TREEVPHSVA…FLEVWVKVQK (79 aa)).

It belongs to the TRAFAC class TrmE-Era-EngA-EngB-Septin-like GTPase superfamily. Era GTPase family. As to quaternary structure, monomer.

It is found in the cytoplasm. It localises to the cell membrane. Functionally, an essential GTPase that binds both GDP and GTP, with rapid nucleotide exchange. Plays a role in 16S rRNA processing and 30S ribosomal subunit biogenesis and possibly also in cell cycle regulation and energy metabolism. The protein is GTPase Era of Listeria monocytogenes serotype 4a (strain HCC23).